Consider the following 57-residue polypeptide: uncharacterized protein (57 aa).

The disordered stretch occupies residues 34-57; that stretch reads QGKRGETEGQIEISRKAGHPAPAF.

This is an uncharacterized protein from Saccharomyces cerevisiae (strain ATCC 204508 / S288c) (Baker's yeast).